Reading from the N-terminus, the 304-residue chain is Ribonuclease HII (304 aa).

A disordered region spans residues 1-53 (MIRDTKQPIKVPAKPASRSGGKAKTVKPKTVKPKAVKAADGKAASAKASTSKA). A compositionally biased stretch (basic residues) spans 24–35 (KTVKPKTVKPKA). Low complexity predominate over residues 36-53 (VKAADGKAASAKASTSKA). One can recognise an RNase H type-2 domain in the interval 96–284 (WPIAGCDEAG…VAAAWQKIEG (189 aa)). A divalent metal cation contacts are provided by Asp102, Glu103, and Asp193.

The protein belongs to the RNase HII family. Mn(2+) serves as cofactor. Mg(2+) is required as a cofactor.

The protein localises to the cytoplasm. The catalysed reaction is Endonucleolytic cleavage to 5'-phosphomonoester.. Functionally, endonuclease that specifically degrades the RNA of RNA-DNA hybrids. The protein is Ribonuclease HII of Rhodopseudomonas palustris (strain ATCC BAA-98 / CGA009).